A 175-amino-acid polypeptide reads, in one-letter code: Bifunctional protein PyrR (175 aa).

Residues 40-41 (TR), R85, 102-110 (DDVLYTGRT), R135, and V159 each bind substrate. Residues 98–110 (VIIIDDVLYTGRT) carry the PRPP-binding motif.

It belongs to the purine/pyrimidine phosphoribosyltransferase family. PyrR subfamily. As to quaternary structure, homodimer and homohexamer; in equilibrium.

The enzyme catalyses UMP + diphosphate = 5-phospho-alpha-D-ribose 1-diphosphate + uracil. Regulates transcriptional attenuation of the pyrimidine nucleotide (pyr) operon by binding in a uridine-dependent manner to specific sites on pyr mRNA. This disrupts an antiterminator hairpin in the RNA and favors formation of a downstream transcription terminator, leading to a reduced expression of downstream genes. Its function is as follows. Also displays a weak uracil phosphoribosyltransferase activity which is not physiologically significant. In Staphylococcus saprophyticus subsp. saprophyticus (strain ATCC 15305 / DSM 20229 / NCIMB 8711 / NCTC 7292 / S-41), this protein is Bifunctional protein PyrR.